We begin with the raw amino-acid sequence, 532 residues long: Protein DETOXIFICATION 48 (532 aa).

A run of 12 helical transmembrane segments spans residues 65 to 85 (ISGP…ISML), 95 to 115 (LAGG…VISG), 136 to 156 (LGLT…PISF), 174 to 194 (ISSV…LLSL), 211 to 231 (VTYS…LLVV), 235 to 255 (MGVA…VVLL), 279 to 301 (GWSA…WWWY), 322 to 342 (GILI…SLGV), 363 to 383 (IISL…AVLV), 397 to 417 (ILQL…GNCP), 437 to 457 (INLG…GFVF), and 464 to 484 (LWFG…CALL). Residues 496–532 (EELTSQTPGKSPPLLPIASSKSRSTSGTEDMMRTMLV) form a disordered region. A compositionally biased stretch (polar residues) spans 514–523 (SSKSRSTSGT).

Belongs to the multi antimicrobial extrusion (MATE) (TC 2.A.66.1) family. As to expression, highly expressed in shoot apices relative to leaves. At vegetative stages, highly expressed at the stipules. At reproductive stages, most highly expressed in the mature pollen. Also expressed in the tips of sepals.

The protein resides in the golgi apparatus membrane. It localises to the late endosome membrane. Functionally, functions as a multidrug and toxin extrusion transporter. Contributes to iron homeostasis during stress responses and senescence. Could be involved in specifying the lateral organ initiation rate. May act as a negative regulator of hypocotyl cell elongation in the light. The protein is Protein DETOXIFICATION 48 of Arabidopsis thaliana (Mouse-ear cress).